The primary structure comprises 342 residues: Probable dual-specificity RNA methyltransferase RlmN (342 aa).

Glu-91 acts as the Proton acceptor in catalysis. The Radical SAM core domain occupies 97-327; it reads YKHGNSICVS…TTIRREMGAD (231 aa). A disulfide bridge links Cys-104 with Cys-332. 3 residues coordinate [4Fe-4S] cluster: Cys-111, Cys-115, and Cys-118. Residues 158–159, Ser-190, 213–215, and Asn-289 each bind S-adenosyl-L-methionine; these read GE and SLH. Cys-332 acts as the S-methylcysteine intermediate in catalysis.

It belongs to the radical SAM superfamily. RlmN family. Requires [4Fe-4S] cluster as cofactor.

It is found in the cytoplasm. The catalysed reaction is adenosine(2503) in 23S rRNA + 2 reduced [2Fe-2S]-[ferredoxin] + 2 S-adenosyl-L-methionine = 2-methyladenosine(2503) in 23S rRNA + 5'-deoxyadenosine + L-methionine + 2 oxidized [2Fe-2S]-[ferredoxin] + S-adenosyl-L-homocysteine. It catalyses the reaction adenosine(37) in tRNA + 2 reduced [2Fe-2S]-[ferredoxin] + 2 S-adenosyl-L-methionine = 2-methyladenosine(37) in tRNA + 5'-deoxyadenosine + L-methionine + 2 oxidized [2Fe-2S]-[ferredoxin] + S-adenosyl-L-homocysteine. Specifically methylates position 2 of adenine 2503 in 23S rRNA and position 2 of adenine 37 in tRNAs. This Clostridium botulinum (strain Okra / Type B1) protein is Probable dual-specificity RNA methyltransferase RlmN.